The chain runs to 367 residues: Chorismate synthase (367 aa).

Positions 41–60 (FTHDLQRRASGKSRHTSARR) are disordered. The NADP(+) site is built by arginine 48 and arginine 54. FMN contacts are provided by residues 125-127 (RSS), 238-239 (NA), glycine 278, 293-297 (KPTSS), and arginine 319.

The protein belongs to the chorismate synthase family. As to quaternary structure, homotetramer. It depends on FMNH2 as a cofactor.

The enzyme catalyses 5-O-(1-carboxyvinyl)-3-phosphoshikimate = chorismate + phosphate. The protein operates within metabolic intermediate biosynthesis; chorismate biosynthesis; chorismate from D-erythrose 4-phosphate and phosphoenolpyruvate: step 7/7. Its function is as follows. Catalyzes the anti-1,4-elimination of the C-3 phosphate and the C-6 proR hydrogen from 5-enolpyruvylshikimate-3-phosphate (EPSP) to yield chorismate, which is the branch point compound that serves as the starting substrate for the three terminal pathways of aromatic amino acid biosynthesis. This reaction introduces a second double bond into the aromatic ring system. The sequence is that of Chorismate synthase from Xanthomonas axonopodis pv. citri (strain 306).